Here is a 261-residue protein sequence, read N- to C-terminus: Hemin import ATP-binding protein HmuV (261 aa).

Residues 3-243 (LQAQDLSVDR…ANLRRVYGVE (241 aa)) enclose the ABC transporter domain. 35 to 42 (GANGAGKS) serves as a coordination point for ATP.

It belongs to the ABC transporter superfamily. Heme (hemin) importer (TC 3.A.1.14.5) family. In terms of assembly, the complex is composed of two ATP-binding proteins (HmuV), two transmembrane proteins (HmuU) and a solute-binding protein (HmuT).

It is found in the cell inner membrane. In terms of biological role, part of the ABC transporter complex HmuTUV involved in hemin import. Responsible for energy coupling to the transport system. This Bordetella avium (strain 197N) protein is Hemin import ATP-binding protein HmuV.